Here is an 830-residue protein sequence, read N- to C-terminus: Histone acetyltransferase KAT2A (830 aa).

Residues methionine 1–arginine 94 form a disordered region. At alanine 2 the chain carries N-acetylalanine. Composition is skewed to pro residues over residues alanine 7 to serine 33 and alanine 41 to alanine 51. A compositionally biased stretch (gly residues) spans threonine 58–glycine 69. A compositionally biased stretch (basic residues) spans serine 83 to arginine 94. The residue at position 302 (serine 302) is a Phosphoserine. Low complexity predominate over residues serine 398–glycine 417. The disordered stretch occupies residues serine 398–lysine 426. An N-acetyltransferase domain is found at valine 496–asparagine 649. An N6-acetyllysine modification is found at lysine 542. The active-site Proton donor/acceptor is the glutamate 568. Acetyl-CoA is bound by residues cysteine 572 to valine 574, glutamine 579 to threonine 585, and tyrosine 610. Succinyl-CoA is bound by residues cysteine 572–valine 574, glutamine 579–threonine 585, and tyrosine 610. Lysine 721 is covalently cross-linked (Glycyl lysine isopeptide (Lys-Gly) (interchain with G-Cter in SUMO2)). The 105-residue stretch at lysine 721–glycine 825 folds into the Bromo domain. A Phosphothreonine modification is found at threonine 728. Residues lysine 752 and lysine 784 each participate in a glycyl lysine isopeptide (Lys-Gly) (interchain with G-Cter in SUMO2) cross-link.

This sequence belongs to the acetyltransferase family. GCN5 subfamily. Interacts with EP300, CREBBP and ADA2. Component of the TFTC-HAT complex, at least composed of TAF5L, TAF6L, TAF3, TADA3L, SUPT3H/SPT3, TAF2/TAFII150, TAF4/TAFII135, TAF5/TAFII100, KAT2A/GCN5L2, TAF10 and TRRAP. Component of the STAGA transcription coactivator-HAT complex, at least composed of SUPT3H, KAT2A, SUPT7L, TAF5L, TAF6L, TADA3L, TAD1L, TAF10, TAF12, TRRAP and TAF9. The STAGA core complex is associated with a subcomplex required for histone deubiquitination composed of ATXN7L3, ENY2 and USP22. Component of the ADA2A-containing complex (ATAC), composed of KAT14, KAT2A, TADA2L, TADA3L, ZZ3, MBIP, WDR5, YEATS2, CCDC101 and DR1. In the complex, it probably interacts directly with KAT14, MBIP and WDR5. Interacts with PML. Interacts with CEBPB. Interacts with TACC1, TACC2 and TACC3. Interacts with RELA. Interacts with NFATC2. Interacts with TBX5. Interacts with PLK4. Associates with the 2-oxoglutarate dehydrogenase complex. Interacts with XPC; leading to KAT2A recruitment to promoters and subsequent acetylation of histones. Interacts with ERCC3/XPB; leading to KAT2A recruitment to promoters and subsequent acetylation of histones. Interacts with ISL1. Interactions of ISL1 with MLIP1 or KAT2A may be mutually exclusive. In terms of processing, acetylated at Lys-542, inhibiting the protein acetyltransferase activity. Deacetylation at Lys-542 by SIRT6 promotes phosphorylation at Ser-302 and Thr-728 and subsequent activation of the protein acetyltransferase activity, leading to acetylation and inactivation of PPARGC1A. In terms of tissue distribution, in brain, highly expressed in the hippocampal CA1 region (at protein level). Also expressed in the hippocampal subregions CA3 and the dentate gyrus as well as in the cortex and prefrontal cortex. Expressed at low level in the cerebellum.

It is found in the nucleus. The protein resides in the chromosome. Its subcellular location is the cytoplasm. The protein localises to the cytoskeleton. It localises to the microtubule organizing center. It is found in the centrosome. It carries out the reaction L-lysyl-[histone] + acetyl-CoA = N(6)-acetyl-L-lysyl-[histone] + CoA + H(+). The catalysed reaction is L-lysyl-[protein] + acetyl-CoA = N(6)-acetyl-L-lysyl-[protein] + CoA + H(+). It catalyses the reaction succinyl-CoA + L-lysyl-[protein] = N(6)-succinyl-L-lysyl-[protein] + CoA + H(+). The enzyme catalyses glutaryl-CoA + L-lysyl-[protein] = N(6)-glutaryl-L-lysyl-[protein] + CoA + H(+). In terms of biological role, protein lysine acyltransferase that can act as a acetyltransferase, glutaryltransferase, succinyltransferase or malonyltransferase, depending on the context. Acts as a histone lysine succinyltransferase: catalyzes succinylation of histone H3 on 'Lys-79' (H3K79succ), with a maximum frequency around the transcription start sites of genes. Succinylation of histones gives a specific tag for epigenetic transcription activation. Association with the 2-oxoglutarate dehydrogenase complex, which provides succinyl-CoA, is required for histone succinylation. In different complexes, functions either as an acetyltransferase (HAT) or as a succinyltransferase: in the SAGA and ATAC complexes, acts as a histone acetyltransferase. Has significant histone acetyltransferase activity with core histones, but not with nucleosome core particles. Has a a strong preference for acetylation of H3 at 'Lys-9' (H3K9ac). Acetylation of histones gives a specific tag for epigenetic transcription activation. Recruited by the XPC complex at promoters, where it specifically mediates acetylation of histone variant H2A.Z.1/H2A.Z, thereby promoting expression of target genes. Involved in long-term memory consolidation and synaptic plasticity: acts by promoting expression of a hippocampal gene expression network linked to neuroactive receptor signaling. Acts as a positive regulator of T-cell activation: upon TCR stimulation, recruited to the IL2 promoter following interaction with NFATC2 and catalyzes acetylation of histone H3 at 'Lys-9' (H3K9ac), leading to promote IL2 expression. Required for growth and differentiation of craniofacial cartilage and bone by regulating acetylation of histone H3 at 'Lys-9' (H3K9ac). Regulates embryonic stem cell (ESC) pluripotency and differentiation. Also acetylates non-histone proteins, such as CEBPB, MRE11, PPARGC1A, PLK4 and TBX5. Involved in heart and limb development by mediating acetylation of TBX5, acetylation regulating nucleocytoplasmic shuttling of TBX5. Acts as a negative regulator of centrosome amplification by mediating acetylation of PLK4. Acts as a negative regulator of gluconeogenesis by mediating acetylation and subsequent inactivation of PPARGC1A. Also acts as a histone glutaryltransferase: catalyzes glutarylation of histone H4 on 'Lys-91' (H4K91glu), a mark that destabilizes nucleosomes by promoting dissociation of the H2A-H2B dimers from nucleosomes. In Mus musculus (Mouse), this protein is Histone acetyltransferase KAT2A.